The sequence spans 554 residues: Trimethyltridecatetraene synthase (554 aa).

A helical transmembrane segment spans residues 1 to 21 (MSAAVALAVILAVYVVLRYIS). Cysteine 464 is a binding site for heme.

This sequence belongs to the cytochrome P450 family. It depends on heme as a cofactor.

It localises to the membrane. It catalyses the reaction (6E,10E)-geranyllinalool + reduced [NADPH--hemoprotein reductase] + O2 = (3E,7E)-4,8,12-trimethyltrideca 1,3,7,11-tetraene + but-3-en-2-one + oxidized [NADPH--hemoprotein reductase] + 2 H2O + H(+). It functions in the pathway secondary metabolite biosynthesis; terpenoid biosynthesis. Functionally, component of the volatile terpenes biosynthesis pathways. Converts mainly geranyllinalool to trimethyltridecatetraene (TMTT). The sequence is that of Trimethyltridecatetraene synthase from Zea mays (Maize).